The chain runs to 101 residues: ATP synthase subunit f, mitochondrial (101 aa).

The N-terminal 6 residues, 1–6, are a transit peptide targeting the mitochondrion; sequence MIFKRA.

It belongs to the ATPase F chain family. F-type ATPases have 2 components, CF(1) - the catalytic core - and CF(0) - the membrane proton channel. In yeast, the dimeric form of ATP synthase consists of 17 polypeptides: alpha, beta, gamma, delta, epsilon, 4 (B), 5 (OSCP), 6 (A), 8, 9 (C), d, E (Tim11), f, g, h, i/j and k.

It localises to the mitochondrion. It is found in the mitochondrion inner membrane. Its function is as follows. Mitochondrial membrane ATP synthase (F(1)F(0) ATP synthase or Complex V) produces ATP from ADP in the presence of a proton gradient across the membrane which is generated by electron transport complexes of the respiratory chain. F-type ATPases consist of two structural domains, F(1) - containing the extramembraneous catalytic core and F(0) - containing the membrane proton channel, linked together by a central stalk and a peripheral stalk. During catalysis, ATP synthesis in the catalytic domain of F(1) is coupled via a rotary mechanism of the central stalk subunits to proton translocation. Part of the complex F(0) domain. Minor subunit located with subunit a in the membrane. In Saccharomyces cerevisiae (strain ATCC 204508 / S288c) (Baker's yeast), this protein is ATP synthase subunit f, mitochondrial (ATP17).